A 153-amino-acid chain; its full sequence is Histone H2B.3 (153 aa).

Composition is skewed to basic and acidic residues over residues 1–10 (MAPKKDEKPA) and 20–54 (AKAE…GEKK). A disordered region spans residues 1–60 (MAPKKDEKPATAEAGAEAPAKAEAKPKAEKAGKKAKKEPAKKAAKEPKGDGEKKDKKKKK). Lys-41 and Lys-42 each carry N6-acetyllysine. Residue Lys-149 forms a Glycyl lysine isopeptide (Lys-Gly) (interchain with G-Cter in ubiquitin) linkage.

This sequence belongs to the histone H2B family. As to quaternary structure, the nucleosome is a histone octamer containing two molecules each of H2A, H2B, H3 and H4 assembled in one H3-H4 heterotetramer and two H2A-H2B heterodimers. The octamer wraps approximately 147 bp of DNA. Post-translationally, the N-terminus is blocked. Can be acetylated to form H2BK33ac and H2BK34ac. Acetylated mainly on the ubiquitinated form. In terms of processing, monoubiquitinated to form H2BK143ub1; which is increased during the light period and may give a specific tag for epigenetic transcriptional activation.

Its subcellular location is the nucleus. The protein resides in the chromosome. In terms of biological role, core component of nucleosome. Nucleosomes wrap and compact DNA into chromatin, limiting DNA accessibility to the cellular machineries which require DNA as a template. Histones thereby play a central role in transcription regulation, DNA repair, DNA replication and chromosomal stability. DNA accessibility is regulated via a complex set of post-translational modifications of histones, also called histone code, and nucleosome remodeling. The polypeptide is Histone H2B.3 (Chlamydomonas reinhardtii (Chlamydomonas smithii)).